A 107-amino-acid chain; its full sequence is Quaternary ammonium compound-resistance protein QacG (107 aa).

A run of 4 helical transmembrane segments spans residues 1–21 (MHYL…SFLK), 26–46 (FTKL…FYFL), 57–77 (ITYA…SVIV), and 84–104 (LISI…NVFG).

This sequence belongs to the drug/metabolite transporter (DMT) superfamily. Small multidrug resistance (SMR) (TC 2.A.7.1) family.

The protein localises to the cell membrane. In terms of biological role, multidrug exporter. Is implicated for the resistance to bacteriocidal quaternary ammonium compounds. In Staphylococcus sp. (strain ST94), this protein is Quaternary ammonium compound-resistance protein QacG (qacG).